Here is a 991-residue protein sequence, read N- to C-terminus: UvrABC system protein A (991 aa).

48 to 55 (GLSGSGKS) provides a ligand contact to ATP. ABC transporter domains are found at residues 345–624 (WAKS…PKSL) and 644–972 (NHRR…KFLE). Residue 676–683 (GVSGGGKS) coordinates ATP. The C4-type zinc-finger motif lies at 775 to 801 (CEACQGDGVIKIEMHFLPDVYVTCDVC).

The protein belongs to the ABC transporter superfamily. UvrA family. Forms a heterotetramer with UvrB during the search for lesions.

The protein localises to the cytoplasm. Its function is as follows. The UvrABC repair system catalyzes the recognition and processing of DNA lesions. UvrA is an ATPase and a DNA-binding protein. A damage recognition complex composed of 2 UvrA and 2 UvrB subunits scans DNA for abnormalities. When the presence of a lesion has been verified by UvrB, the UvrA molecules dissociate. The sequence is that of UvrABC system protein A from Bradyrhizobium diazoefficiens (strain JCM 10833 / BCRC 13528 / IAM 13628 / NBRC 14792 / USDA 110).